A 254-amino-acid polypeptide reads, in one-letter code: Small ribosomal subunit protein uS2 (254 aa).

This sequence belongs to the universal ribosomal protein uS2 family.

This chain is Small ribosomal subunit protein uS2, found in Borrelia recurrentis (strain A1).